A 233-amino-acid polypeptide reads, in one-letter code: Orotidine 5'-phosphate decarboxylase (233 aa).

Substrate-binding positions include Asp10, Lys32, 59 to 68 (DLKFHDIPNT), Thr119, Arg180, Gln189, Gly209, and Arg210. Lys61 serves as the catalytic Proton donor.

The protein belongs to the OMP decarboxylase family. Type 1 subfamily. Homodimer.

The enzyme catalyses orotidine 5'-phosphate + H(+) = UMP + CO2. It participates in pyrimidine metabolism; UMP biosynthesis via de novo pathway; UMP from orotate: step 2/2. Catalyzes the decarboxylation of orotidine 5'-monophosphate (OMP) to uridine 5'-monophosphate (UMP). The chain is Orotidine 5'-phosphate decarboxylase from Pasteurella multocida (strain Pm70).